Reading from the N-terminus, the 425-residue chain is Type II secretion system protein L (425 aa).

Over methionine 1–proline 273 the chain is Cytoplasmic. A helical transmembrane segment spans residues tryptophan 274–alanine 290. The Periplasmic portion of the chain corresponds to aspartate 291–glutamine 425.

This sequence belongs to the GSP L family. In terms of assembly, type II secretion system is composed of four main components: the outer membrane complex, the inner membrane complex, the cytoplasmic secretion ATPase and the periplasm-spanning pseudopilus. Forms homodimers. Interacts with OutM/GspM. Interacts with OutE/GspE and OutF/GspF.

It localises to the cell inner membrane. In terms of biological role, inner membrane component of the type II secretion system required for the energy-dependent secretion of extracellular factors such as proteases and toxins from the periplasm. Plays a role in the complex assembly and recruits OutM resulting in a stable complex in the inner membrane. Provides thus a link between the energy-providing OutE protein in the cytoplasm and the rest of the T2SS machinery. This is Type II secretion system protein L (outL) from Pectobacterium carotovorum subsp. carotovorum (Erwinia carotovora subsp. carotovora).